The following is a 49-amino-acid chain: uncharacterized protein (49 aa).

The chain crosses the membrane as a helical span at residues Ile-6–Phe-28.

It localises to the membrane. This is an uncharacterized protein from Saccharomyces cerevisiae (strain ATCC 204508 / S288c) (Baker's yeast).